The chain runs to 129 residues: Small ribosomal subunit protein uS11 (129 aa).

Belongs to the universal ribosomal protein uS11 family. In terms of assembly, part of the 30S ribosomal subunit. Interacts with proteins S7 and S18. Binds to IF-3.

Its function is as follows. Located on the platform of the 30S subunit, it bridges several disparate RNA helices of the 16S rRNA. Forms part of the Shine-Dalgarno cleft in the 70S ribosome. This is Small ribosomal subunit protein uS11 from Thermosipho africanus (strain TCF52B).